The chain runs to 401 residues: Lipoyl synthase 1, mitochondrial (401 aa).

Residues 1–25 (MWSSSSSLCRNPSFRRAWLSTVTVT) constitute a mitochondrion transit peptide. Residues 49-79 (IDDFSSTNAPTTTTHYTSSNGSPIVRQKAAP) form a disordered region. Positions 51-70 (DFSSTNAPTTTTHYTSSNGS) are enriched in polar residues. Cysteine 117, cysteine 122, cysteine 128, cysteine 148, cysteine 152, cysteine 155, and serine 376 together coordinate [4Fe-4S] cluster. The Radical SAM core domain occupies 133–365 (EDQTATATIM…QETAMGMGFA (233 aa)).

Belongs to the radical SAM superfamily. Lipoyl synthase family. [4Fe-4S] cluster is required as a cofactor.

The protein resides in the mitochondrion. It catalyses the reaction [[Fe-S] cluster scaffold protein carrying a second [4Fe-4S](2+) cluster] + N(6)-octanoyl-L-lysyl-[protein] + 2 oxidized [2Fe-2S]-[ferredoxin] + 2 S-adenosyl-L-methionine + 4 H(+) = [[Fe-S] cluster scaffold protein] + N(6)-[(R)-dihydrolipoyl]-L-lysyl-[protein] + 4 Fe(3+) + 2 hydrogen sulfide + 2 5'-deoxyadenosine + 2 L-methionine + 2 reduced [2Fe-2S]-[ferredoxin]. It participates in protein modification; protein lipoylation via endogenous pathway; protein N(6)-(lipoyl)lysine from octanoyl-[acyl-carrier-protein]: step 2/2. Catalyzes the radical-mediated insertion of two sulfur atoms into the C-6 and C-8 positions of the octanoyl moiety bound to the lipoyl domains of lipoate-dependent enzymes, thereby converting the octanoylated domains into lipoylated derivatives. This Phaeodactylum tricornutum (strain CCAP 1055/1) protein is Lipoyl synthase 1, mitochondrial.